The chain runs to 111 residues: Class I hydrophobin 2 (111 aa).

A signal peptide spans 1-21; that stretch reads MFSRVMFCTFLILPLLAAATA. 4 disulfide bridges follow: cysteine 30/cysteine 90, cysteine 37/cysteine 84, cysteine 38/cysteine 71, and cysteine 91/cysteine 104.

The protein belongs to the fungal hydrophobin family. In terms of assembly, self-assembles to form functional amyloid fibrils called rodlets. Self-assembly into fibrillar rodlets occurs spontaneously at hydrophobic:hydrophilic interfaces and the rodlets further associate laterally to form amphipathic monolayers. Behavior depends on environmental conditions: (1) when the pH increases or in the presence of Ca(2+) ions, an assembled state, beta-sheet rich, is formed; (2) when the solvent polarity increases, the vhm2 shows an increased tendency to reach hydrophobic/hydrophilic interfaces, with no detectable conformational change; and (3) at high temperature, a reversible conformational change and reversible aggregation occur. The physical and chemical properties, both in solution and as a biofilm, are affected by polysaccharides that act as hydrophilic stabilizer.

Its subcellular location is the secreted. It localises to the cell wall. Aerial growth, conidiation, and dispersal of filamentous fungi in the environment rely upon a capability of their secreting small amphipathic proteins called hydrophobins (HPBs) with low sequence identity. Class I can self-assemble into an outermost layer of rodlet bundles on aerial cell surfaces, conferring cellular hydrophobicity that supports fungal growth, development and dispersal; whereas Class II form highly ordered films at water-air interfaces through intermolecular interactions but contribute nothing to the rodlet structure. Vmh2 is a class I hydrophobin involved in biofilm formation and is essential for the maintenance of the surface hydrophobicity of the mycelium. Seems not to be involved in hyphal resistance against environmental stress. The sequence is that of Class I hydrophobin 2 from Pleurotus ostreatus (strain PC15) (Oyster mushroom).